Consider the following 344-residue polypeptide: Ferredoxin--NADP reductase (344 aa).

S12, D31, K39, Y43, V83, I118, D285, and S326 together coordinate FAD.

It belongs to the ferredoxin--NADP reductase type 2 family. In terms of assembly, homodimer. Requires FAD as cofactor.

It carries out the reaction 2 reduced [2Fe-2S]-[ferredoxin] + NADP(+) + H(+) = 2 oxidized [2Fe-2S]-[ferredoxin] + NADPH. This is Ferredoxin--NADP reductase from Staphylococcus aureus (strain JH1).